The chain runs to 744 residues: Catalase-peroxidase 3 (744 aa).

The tryptophyl-tyrosyl-methioninium (Trp-Tyr) (with M-254) cross-link spans 106–228 (WHFAGTYRIG…LAASEMGLIY (123 aa)). Catalysis depends on His107, which acts as the Proton acceptor. Positions 228 to 254 (YVDPQGPATLPDPLASARDIRETFRRM) form a cross-link, tryptophyl-tyrosyl-methioninium (Tyr-Met) (with W-106). Residue His269 coordinates heme b.

This sequence belongs to the peroxidase family. Peroxidase/catalase subfamily. Homodimer or homotetramer. It depends on heme b as a cofactor. In terms of processing, formation of the three residue Trp-Tyr-Met cross-link is important for the catalase, but not the peroxidase activity of the enzyme.

It carries out the reaction H2O2 + AH2 = A + 2 H2O. The enzyme catalyses 2 H2O2 = O2 + 2 H2O. In terms of biological role, bifunctional enzyme with both catalase and broad-spectrum peroxidase activity. This Mycolicibacterium smegmatis (strain ATCC 700084 / mc(2)155) (Mycobacterium smegmatis) protein is Catalase-peroxidase 3.